A 237-amino-acid polypeptide reads, in one-letter code: uncharacterized protein (237 aa).

The tat-type signal signal peptide spans 1 to 25; it reads MRHIFQRLLPRRLWLAGLPCLALLG. Residues 201–237 form a disordered region; that stretch reads IERQLSTRKPAGNFSPDTPHESEKPAPSTHEVTPDEP.

In terms of processing, exported by the Tat system. The position of the signal peptide cleavage has not been experimentally proven. Can also be exported by the Sec system.

This is an uncharacterized protein from Escherichia coli (strain K12).